The sequence spans 329 residues: Eukaryotic translation initiation factor 3 subunit I (329 aa).

5 WD repeats span residues 8–47, 50–89, 145–184, 187–226, and 284–323; these read GHQR…RLGT, GHGG…NIAT, ITDS…KIHS, EHTH…LLKE, and GHFG…FDYT.

The protein belongs to the eIF-3 subunit I family. As to quaternary structure, component of the eukaryotic translation initiation factor 3 (eIF-3) complex.

Its subcellular location is the cytoplasm. In terms of biological role, component of the eukaryotic translation initiation factor 3 (eIF-3) complex, which is involved in protein synthesis of a specialized repertoire of mRNAs and, together with other initiation factors, stimulates binding of mRNA and methionyl-tRNAi to the 40S ribosome. The eIF-3 complex specifically targets and initiates translation of a subset of mRNAs involved in cell proliferation. The sequence is that of Eukaryotic translation initiation factor 3 subunit I from Bombyx mori (Silk moth).